The chain runs to 297 residues: Thiosulfate sulfurtransferase (297 aa).

N6-acetyllysine; alternate is present on lysine 14. Lysine 14 bears the N6-succinyllysine; alternate mark. The Rhodanese 1 domain occupies 25–143 (LGPGLRVLDA…WLKEGHPVTS (119 aa)). The O-linked (GlcNAc) serine glycan is linked to serine 35. Phosphoserine is present on serine 38. Residue lysine 136 is modified to N6-acetyllysine; alternate. An N6-succinyllysine; alternate modification is found at lysine 136. The tract at residues 144–159 (EPSRPEPAVFKATLDR) is hinge. N6-acetyllysine is present on lysine 163. The Rhodanese 2 domain occupies 173–288 (QSKRFQLVDS…WFHQAPPETR (116 aa)). At lysine 175 the chain carries N6-acetyllysine; alternate. Lysine 175 carries the post-translational modification N6-succinyllysine; alternate. Arginine 187 is a binding site for substrate. N6-acetyllysine; alternate is present on lysine 224. Position 224 is an N6-succinyllysine; alternate (lysine 224). Lysine 236 is subject to N6-acetyllysine. Lysine 237 is modified (N6-acetyllysine; alternate). Position 237 is an N6-succinyllysine; alternate (lysine 237). Cysteine 248 serves as the catalytic Cysteine persulfide intermediate. Residue lysine 250 participates in substrate binding.

Monomer.

It is found in the mitochondrion matrix. The catalysed reaction is thiosulfate + hydrogen cyanide = thiocyanate + sulfite + 2 H(+). Its function is as follows. Together with MRPL18, acts as a mitochondrial import factor for the cytosolic 5S rRNA. Only the nascent unfolded cytoplasmic form is able to bind to the 5S rRNA. Formation of iron-sulfur complexes and cyanide detoxification. Binds molecular oxygen and sulfur. In Cricetulus griseus (Chinese hamster), this protein is Thiosulfate sulfurtransferase (TST).